The sequence spans 1138 residues: Ras guanine nucleotide exchange factor N (1138 aa).

LRR repeat units follow at residues Met-1–Leu-16, His-18–Gly-39, and Thr-43–Leu-64. Disordered regions lie at residues Ala-126–Asn-180, Phe-239–Lys-301, Asn-319–Asn-360, Ile-389–Gln-411, Gly-473–Asn-540, Ala-601–Ser-643, and Met-660–Gly-680. Residues Lys-140–Thr-158 show a composition bias toward low complexity. The span at Arg-263–Ile-275 shows a compositional bias: polar residues. Gly residues predominate over residues Ser-283–Ser-299. A compositionally biased stretch (low complexity) spans Gly-326–Ile-352. Basic and acidic residues predominate over residues Arg-393 to Ile-405. Residues Pro-487 to Ile-496 show a composition bias toward pro residues. The span at Asp-498 to Ile-511 shows a compositional bias: polar residues. Composition is skewed to low complexity over residues Asn-512 to Asn-540 and Asn-605 to Gln-634. The N-terminal Ras-GEF domain maps to Gly-733–Arg-855. Residues Arg-891–Lys-1118 enclose the Ras-GEF domain.

Functionally, promotes the exchange of Ras-bound GDP by GTP. May play a role in chemotaxis. This is Ras guanine nucleotide exchange factor N (gefN) from Dictyostelium discoideum (Social amoeba).